A 634-amino-acid polypeptide reads, in one-letter code: DNA-directed RNA polymerase subunit gamma (634 aa).

Cys-74, Cys-76, Cys-89, and Cys-92 together coordinate Zn(2+). Asp-471, Asp-473, and Asp-475 together coordinate Mg(2+).

This sequence belongs to the RNA polymerase beta' chain family. RpoC1 subfamily. As to quaternary structure, in cyanobacteria the RNAP catalytic core is composed of 2 alpha, 1 beta, 1 beta', 1 gamma and 1 omega subunit. When a sigma factor is associated with the core the holoenzyme is formed, which can initiate transcription. Mg(2+) serves as cofactor. The cofactor is Zn(2+).

The enzyme catalyses RNA(n) + a ribonucleoside 5'-triphosphate = RNA(n+1) + diphosphate. Its function is as follows. DNA-dependent RNA polymerase catalyzes the transcription of DNA into RNA using the four ribonucleoside triphosphates as substrates. The protein is DNA-directed RNA polymerase subunit gamma of Prochlorococcus marinus (strain MIT 9313).